A 100-amino-acid chain; its full sequence is Mitochondrial import inner membrane translocase subunit Tim10 B (100 aa).

Residues 25–49 (CFQRCVPSLHHRALDAEEEACLHSC) carry the Twin CX3C motif motif. 2 disulfide bridges follow: cysteine 25/cysteine 49 and cysteine 29/cysteine 45.

The protein belongs to the small Tim family. In terms of assembly, component of the TIM22 complex, which core is composed of TIMM22, associated with TIMM10 (TIMM10A and/or TIMM10B), TIMM9, AGK and TIMM29.

The protein localises to the mitochondrion inner membrane. In terms of biological role, component of the TIM22 complex, a complex that mediates the import and insertion of multi-pass transmembrane proteins into the mitochondrial inner membrane. The TIM22 complex forms a twin-pore translocase that uses the membrane potential as the external driving force. In the TIM22 complex, it may act as a docking point for the soluble 70 kDa complex that guides the target proteins in transit through the aqueous mitochondrial intermembrane space. In Mus musculus (Mouse), this protein is Mitochondrial import inner membrane translocase subunit Tim10 B (Timm10b).